A 762-amino-acid polypeptide reads, in one-letter code: PHD finger protein 20-like protein 1 (762 aa).

Tudor domains lie at 11-71 and 85-141; these read ITFE…LERP and VDFK…EDAK. Disordered regions lie at residues 178-231, 289-359, 383-411, 536-559, and 613-651; these read AKNK…TSSD, AEKK…CIKP, SVIN…RSQR, SLKL…EGTE, and LSGK…QHDY. The segment covering 193 to 211 has biased composition (basic and acidic residues); it reads NKDKEERKWLKVPSKKEET. Polar residues-rich tracts occupy residues 319 to 340 and 383 to 398; these read DISS…SSGK and SVIN…NSPR. The segment covering 399 to 410 has biased composition (basic residues); it reads SYKHSQRRRRSQ. Basic and acidic residues predominate over residues 614–632; it reads SGKKKEKEKEKKEKKEKDH. Basic residues predominate over residues 633-647; sequence KSKQKKKKKKKKKSK.

It is found in the nucleus. Its function is as follows. Is a negative regulator of proteasomal degradation of methylated proteins. Involved in the maintainance of pluripotency of embryonic stem cells. This Gallus gallus (Chicken) protein is PHD finger protein 20-like protein 1 (PHF20L1).